A 365-amino-acid polypeptide reads, in one-letter code: Sulfate/thiosulfate import ATP-binding protein CysA (365 aa).

One can recognise an ABC transporter domain in the interval 3-237 (IEIANIKKSF…PATRFVLEFM (235 aa)). Residue 35–42 (GPSGSGKT) participates in ATP binding.

Belongs to the ABC transporter superfamily. Sulfate/tungstate importer (TC 3.A.1.6) family. The complex is composed of two ATP-binding proteins (CysA), two transmembrane proteins (CysT and CysW) and a solute-binding protein (CysP).

Its subcellular location is the cell inner membrane. It catalyses the reaction sulfate(out) + ATP + H2O = sulfate(in) + ADP + phosphate + H(+). It carries out the reaction thiosulfate(out) + ATP + H2O = thiosulfate(in) + ADP + phosphate + H(+). Part of the ABC transporter complex CysAWTP involved in sulfate/thiosulfate import. Responsible for energy coupling to the transport system. The polypeptide is Sulfate/thiosulfate import ATP-binding protein CysA (Escherichia coli (strain K12)).